The chain runs to 689 residues: Long-chain fatty acid transport protein 5 (689 aa).

The Cytoplasmic segment spans residues 1–29 (MGIWKKLTLLLLLLLLVGLGQPPWPAAMA). 2 helical membrane-spanning segments follow: residues 30–50 (LALRWFLGDPTCLVLLGLALL) and 55–75 (ISSWMPHWLSLVGAALTLFLL). Residues 76 to 689 (PLQPPPGLRW…QAVCEGTWNL (614 aa)) are Cytoplasmic-facing. 292–303 (IFTSGTTGLPKP) contributes to the AMP binding site.

Belongs to the ATP-dependent AMP-binding enzyme family. In terms of tissue distribution, liver-specific (at protein level). In liver expressed in a periportal distribution.

It is found in the endoplasmic reticulum membrane. Its subcellular location is the microsome. The protein resides in the cell membrane. It carries out the reaction a fatty acid(in) = a fatty acid(out). The catalysed reaction is cholate + ATP + CoA = choloyl-CoA + AMP + diphosphate. It catalyses the reaction (25R)-3alpha,7alpha,12alpha-trihydroxy-5beta-cholestan-26-oate + ATP + CoA = (25R)-3alpha,7alpha,12alpha-trihydroxy-5beta-cholestan-26-oyl-CoA + AMP + diphosphate. The enzyme catalyses chenodeoxycholate + ATP + CoA = chenodeoxycholoyl-CoA + AMP + diphosphate. It carries out the reaction deoxycholate + ATP + CoA = deoxycholoyl-CoA + AMP + diphosphate. The catalysed reaction is lithocholate + ATP + CoA = lithocholoyl-CoA + AMP + diphosphate. It catalyses the reaction a very long-chain fatty acid + ATP + CoA = a very long-chain fatty acyl-CoA + AMP + diphosphate. The enzyme catalyses tetracosanoate + ATP + CoA = tetracosanoyl-CoA + AMP + diphosphate. It carries out the reaction hexacosanoate + ATP + CoA = hexacosanoyl-CoA + AMP + diphosphate. The catalysed reaction is a long-chain fatty acid + ATP + CoA = a long-chain fatty acyl-CoA + AMP + diphosphate. It catalyses the reaction octadecanoate + ATP + CoA = octadecanoyl-CoA + AMP + diphosphate. The enzyme catalyses eicosanoate + ATP + CoA = eicosanoyl-CoA + AMP + diphosphate. Mediates the import of long-chain fatty acids (LCFA) by facilitating their transport across cell membranes. Also catalyzes the ATP-dependent formation of fatty acyl-CoA using LCFA and very-long-chain fatty acids (VLCFA) as substrates. Mainly functions as a bile acyl-CoA synthetase catalyzing the activation of bile acids via ATP-dependent formation of bile acid CoA thioesters which is necessary for their subsequent conjugation with glycine or taurine. Both primary bile acids (cholic acid and chenodeoxycholic acid) and secondary bile acids (deoxycholic acid and lithocholic acid) are the principal substrates. In vitro, activates 3-alpha,7-alpha,12-alpha-trihydroxy-5-beta-cholestanate ((25R)-3alpha,7alpha,12alpha-trihydroxy-5beta-cholestan-26-oate or THCA), the C27 precursor of cholic acid deriving from the de novo synthesis from cholesterol. Plays an important role in hepatic fatty acid uptake and bile acid reconjugation and recycling but not in de novo synthesis of bile acids. This is Long-chain fatty acid transport protein 5 (Slc27a5) from Mus musculus (Mouse).